A 142-amino-acid chain; its full sequence is Transcription antitermination protein NusB (142 aa).

It belongs to the NusB family.

In terms of biological role, involved in transcription antitermination. Required for transcription of ribosomal RNA (rRNA) genes. Binds specifically to the boxA antiterminator sequence of the ribosomal RNA (rrn) operons. This chain is Transcription antitermination protein NusB, found in Roseiflexus sp. (strain RS-1).